We begin with the raw amino-acid sequence, 473 residues long: Lactate utilization protein B (473 aa).

4Fe-4S ferredoxin-type domains follow at residues 302–332 and 351–380; these read GSEF…GHSY and YDDY…LHDL. Positions 311, 314, 317, 321, 364, 367, and 371 each coordinate [4Fe-4S] cluster.

It belongs to the LutB/YkgF family.

Is involved in L-lactate degradation and allows cells to grow with lactate as the sole carbon source. Has probably a role as an electron transporter during oxidation of L-lactate. In Bacillus anthracis (strain A0248), this protein is Lactate utilization protein B.